The sequence spans 37 residues: Photosystem II reaction center protein K (37 aa).

At 1–15 the chain is on the lumenal side; sequence KLPEAYAIFDPLVDV. The helical transmembrane segment at 16–30 threads the bilayer; sequence LPVIPVLFFALAFVV. Residues 31-37 lie on the Cytoplasmic side of the membrane; that stretch reads QAAVGFR.

The protein belongs to the PsbK family. In terms of assembly, PSII is composed of 1 copy each of membrane proteins PsbA, PsbB, PsbC, PsbD, PsbE, PsbF, PsbH, PsbI, PsbJ, PsbK, PsbL, PsbM, PsbT, PsbX, PsbY, PsbZ, Psb30/Ycf12, peripheral proteins PsbO, CyanoQ (PsbQ), PsbU, PsbV and a large number of cofactors. It forms dimeric complexes. The cofactor is PSII binds multiple chlorophylls, carotenoids and specific lipids..

The protein localises to the cellular thylakoid membrane. In terms of biological role, one of the components of the core complex of photosystem II (PSII). PSII is a light-driven water:plastoquinone oxidoreductase that uses light energy to abstract electrons from H(2)O, generating O(2) and a proton gradient subsequently used for ATP formation. It consists of a core antenna complex that captures photons, and an electron transfer chain that converts photonic excitation into a charge separation. In Thermostichus vulcanus (Synechococcus vulcanus), this protein is Photosystem II reaction center protein K.